We begin with the raw amino-acid sequence, 556 residues long: Phosphoacetylglucosamine mutase (556 aa).

The active-site Phosphoserine intermediate is the Ser-68. Mg(2+) is bound by residues Ser-68, Asp-286, Asp-288, and Asp-290. At Ser-68 the chain carries Phosphoserine. Substrate contacts are provided by residues 386 to 388 (EAN), 518 to 522 (RPSGT), and Arg-527.

This sequence belongs to the phosphohexose mutase family. It depends on Mg(2+) as a cofactor.

It catalyses the reaction N-acetyl-alpha-D-glucosamine 1-phosphate = N-acetyl-D-glucosamine 6-phosphate. Its pathway is nucleotide-sugar biosynthesis; UDP-N-acetyl-alpha-D-glucosamine biosynthesis; N-acetyl-alpha-D-glucosamine 1-phosphate from alpha-D-glucosamine 6-phosphate (route I): step 2/2. In terms of biological role, interconverts GlcNAc-6-P and GlcNAc-1-P. This chain is Phosphoacetylglucosamine mutase (DRT101), found in Arabidopsis thaliana (Mouse-ear cress).